The chain runs to 1097 residues: DNA polymerase catalytic subunit (1097 aa).

The segment at arginine 1069–threonine 1097 is disordered. A compositionally biased stretch (basic and acidic residues) spans aspartate 1078–threonine 1097.

This sequence belongs to the DNA polymerase type-B family.

The protein localises to the host nucleus. The enzyme catalyses DNA(n) + a 2'-deoxyribonucleoside 5'-triphosphate = DNA(n+1) + diphosphate. This chain is DNA polymerase catalytic subunit (UL54), found in Murid herpesvirus 1 (strain Smith) (MuHV-1).